The sequence spans 106 residues: Large ribosomal subunit protein uL23 (106 aa).

It belongs to the universal ribosomal protein uL23 family. As to quaternary structure, part of the 50S ribosomal subunit. Contacts protein L29, and trigger factor when it is bound to the ribosome.

One of the early assembly proteins it binds 23S rRNA. One of the proteins that surrounds the polypeptide exit tunnel on the outside of the ribosome. Forms the main docking site for trigger factor binding to the ribosome. In Acinetobacter baylyi (strain ATCC 33305 / BD413 / ADP1), this protein is Large ribosomal subunit protein uL23.